A 104-amino-acid polypeptide reads, in one-letter code: UPF0145 protein cbdbA1711 (104 aa).

The protein belongs to the UPF0145 family.

The protein is UPF0145 protein cbdbA1711 of Dehalococcoides mccartyi (strain CBDB1).